Reading from the N-terminus, the 174-residue chain is U1 small nuclear ribonucleoprotein C (174 aa).

Residues 4 to 36 form a Matrin-type zinc finger; the sequence is YYCDYCDKYLTHDSPSVRKSHTVGKQHKLAVQL. Composition is skewed to low complexity over residues 82 to 109 and 122 to 140; these read QQQQQQQQQQGILPFQGMQPPPHQQQGM and PHQFNNNNNPHQQHSFQPP. The segment at 82–174 is disordered; sequence QQQQQQQQQQ…QHNQPTIPGL (93 aa). Positions 141 to 163 are enriched in basic residues; the sequence is HHQHHPHQQHQQHQQHQHQHQHQ. Residues 164–174 are compositionally biased toward low complexity; it reads QQHNQPTIPGL.

The protein belongs to the U1 small nuclear ribonucleoprotein C family. In terms of assembly, component of the U1 snRNP. The U1 snRNP is composed of the U1 snRNA and the 7 core Sm proteins SNRPB, SNRPD1, SNRPD2, SNRPD3, SNRPE, SNRPF and SNRPG that assemble in a heptameric protein ring on the Sm site of the small nuclear RNA to form the core snRNP, and at least 3 U1 snRNP-specific proteins SNRNP70/U1-70K, SNRPA/U1-A and SNRPC/U1-C. SNRPC/U1-C interacts with U1 snRNA and the 5' splice-site region of the pre-mRNA.

It is found in the nucleus. Component of the spliceosomal U1 snRNP, which is essential for recognition of the pre-mRNA 5' splice-site and the subsequent assembly of the spliceosome. SNRPC/U1-C is directly involved in initial 5' splice-site recognition for both constitutive and regulated alternative splicing. The interaction with the 5' splice-site seems to precede base-pairing between the pre-mRNA and the U1 snRNA. Stimulates commitment or early (E) complex formation by stabilizing the base pairing of the 5' end of the U1 snRNA and the 5' splice-site region. This chain is U1 small nuclear ribonucleoprotein C, found in Dictyostelium discoideum (Social amoeba).